Reading from the N-terminus, the 87-residue chain is Mitochondrial import inner membrane translocase subunit TIM9 (87 aa).

Positions 35–59 (CFSDCVNDFTSSKLTSKEQTCIMRC) match the Twin CX3C motif motif. 2 disulfides stabilise this stretch: C35–C59 and C39–C55.

This sequence belongs to the small Tim family. In terms of assembly, heterohexamer; composed of 3 copies of TIM9 and 3 copies of TIM10, named soluble 70 kDa complex. Associates with the TIM22 complex, whose core is composed of TIM22 and TIM54. Interacts with the transmembrane regions of multi-pass transmembrane proteins in transit.

The protein localises to the mitochondrion inner membrane. Functionally, mitochondrial intermembrane chaperone that participates in the import and insertion of multi-pass transmembrane proteins into the mitochondrial inner membrane. Also required for the transfer of beta-barrel precursors from the TOM complex to the sorting and assembly machinery (SAM complex) of the outer membrane. Acts as a chaperone-like protein that protects the hydrophobic precursors from aggregation and guide them through the mitochondrial intermembrane space. The protein is Mitochondrial import inner membrane translocase subunit TIM9 (TIM9) of Eremothecium gossypii (strain ATCC 10895 / CBS 109.51 / FGSC 9923 / NRRL Y-1056) (Yeast).